The sequence spans 367 residues: Leucine-rich repeat-containing protein 28 (367 aa).

LRR repeat units follow at residues 16–36, 42–63, 66–87, 89–110, 112–133, 135–156, 158–180, 181–202, and 204–226; these read KHKN…ELLK, YLER…LAQK, NLVE…IGSL, KLQC…IGRL, ALRH…VGDL, ELQT…LHMC, SLQY…CQLP, SLNE…LGRS, and ELQY…LYNK.

In Homo sapiens (Human), this protein is Leucine-rich repeat-containing protein 28 (LRRC28).